The chain runs to 83 residues: Cytochrome b559 subunit alpha (83 aa).

A helical membrane pass occupies residues 21-35; that stretch reads VIHSITIPSLFIAGW. His-23 is a heme binding site.

Belongs to the PsbE/PsbF family. Heterodimer of an alpha subunit and a beta subunit. PSII is composed of 1 copy each of membrane proteins PsbA, PsbB, PsbC, PsbD, PsbE, PsbF, PsbH, PsbI, PsbJ, PsbK, PsbL, PsbM, PsbT, PsbX, PsbY, PsbZ, Psb30/Ycf12, at least 3 peripheral proteins of the oxygen-evolving complex and a large number of cofactors. It forms dimeric complexes. The cofactor is heme b.

It is found in the plastid. The protein localises to the chloroplast thylakoid membrane. In terms of biological role, this b-type cytochrome is tightly associated with the reaction center of photosystem II (PSII). PSII is a light-driven water:plastoquinone oxidoreductase that uses light energy to abstract electrons from H(2)O, generating O(2) and a proton gradient subsequently used for ATP formation. It consists of a core antenna complex that captures photons, and an electron transfer chain that converts photonic excitation into a charge separation. This chain is Cytochrome b559 subunit alpha, found in Chara vulgaris (Common stonewort).